The chain runs to 155 residues: SsrA-binding protein (155 aa).

The protein belongs to the SmpB family.

The protein localises to the cytoplasm. Its function is as follows. Required for rescue of stalled ribosomes mediated by trans-translation. Binds to transfer-messenger RNA (tmRNA), required for stable association of tmRNA with ribosomes. tmRNA and SmpB together mimic tRNA shape, replacing the anticodon stem-loop with SmpB. tmRNA is encoded by the ssrA gene; the 2 termini fold to resemble tRNA(Ala) and it encodes a 'tag peptide', a short internal open reading frame. During trans-translation Ala-aminoacylated tmRNA acts like a tRNA, entering the A-site of stalled ribosomes, displacing the stalled mRNA. The ribosome then switches to translate the ORF on the tmRNA; the nascent peptide is terminated with the 'tag peptide' encoded by the tmRNA and targeted for degradation. The ribosome is freed to recommence translation, which seems to be the essential function of trans-translation. This is SsrA-binding protein from Bacillus mycoides (strain KBAB4) (Bacillus weihenstephanensis).